The primary structure comprises 152 residues: Deoxyuridine 5'-triphosphate nucleotidohydrolase (152 aa).

Residues 71–73 (RSG), N84, 88–90 (LID), and M98 each bind substrate.

This sequence belongs to the dUTPase family. Requires Mg(2+) as cofactor.

It catalyses the reaction dUTP + H2O = dUMP + diphosphate + H(+). Its pathway is pyrimidine metabolism; dUMP biosynthesis; dUMP from dCTP (dUTP route): step 2/2. In terms of biological role, this enzyme is involved in nucleotide metabolism: it produces dUMP, the immediate precursor of thymidine nucleotides and it decreases the intracellular concentration of dUTP so that uracil cannot be incorporated into DNA. In Photorhabdus laumondii subsp. laumondii (strain DSM 15139 / CIP 105565 / TT01) (Photorhabdus luminescens subsp. laumondii), this protein is Deoxyuridine 5'-triphosphate nucleotidohydrolase.